We begin with the raw amino-acid sequence, 180 residues long: MFPMMTGFMNYGQQTVRAARYIGQSFMITLSHANRLPVTIQYPYEKSITSERFRGRIHFEFDKCIACEVCVRVCPIDLPVVDWRLETDIRKKRLLNYSIDFGICIFCGNCVEYCPTNCLSMTEEYELSTYDRHELNYNQIALGRLPMSVIGDYTIRTIMNSTQIKIATDNPLDSRTITNY.

4Fe-4S ferredoxin-type domains lie at 55 to 84 (GRIH…VDWR) and 95 to 124 (LNYS…MTEE). Residues Cys-64, Cys-67, Cys-70, Cys-74, Cys-104, Cys-107, Cys-110, and Cys-114 each coordinate [4Fe-4S] cluster.

It belongs to the complex I 23 kDa subunit family. As to quaternary structure, NDH is composed of at least 16 different subunits, 5 of which are encoded in the nucleus. [4Fe-4S] cluster serves as cofactor.

It localises to the plastid. Its subcellular location is the chloroplast thylakoid membrane. It catalyses the reaction a plastoquinone + NADH + (n+1) H(+)(in) = a plastoquinol + NAD(+) + n H(+)(out). The enzyme catalyses a plastoquinone + NADPH + (n+1) H(+)(in) = a plastoquinol + NADP(+) + n H(+)(out). NDH shuttles electrons from NAD(P)H:plastoquinone, via FMN and iron-sulfur (Fe-S) centers, to quinones in the photosynthetic chain and possibly in a chloroplast respiratory chain. The immediate electron acceptor for the enzyme in this species is believed to be plastoquinone. Couples the redox reaction to proton translocation, and thus conserves the redox energy in a proton gradient. The protein is NAD(P)H-quinone oxidoreductase subunit I, chloroplastic of Liriodendron tulipifera (Tuliptree).